The following is a 57-amino-acid chain: Sperm protamine P1-type (57 aa).

The segment at 1–57 is disordered; it reads MARYRHNRSRSRSRHRRRRRGHRGGRYRRRRRRGRYGHRRHHRGHSRRRRKRRRSRH.

This sequence belongs to the protamine P1 family. As to expression, testis.

The protein resides in the nucleus. The protein localises to the chromosome. Its function is as follows. Protamines substitute for histones in the chromatin of sperm during the haploid phase of spermatogenesis. They compact sperm DNA into a highly condensed, stable and inactive complex. In Alligator mississippiensis (American alligator), this protein is Sperm protamine P1-type.